The sequence spans 581 residues: Coiled-coil domain-containing protein 102A (581 aa).

Disordered regions lie at residues 1-61 (MNHT…GLGC), 156-219 (QRVR…IGTD), 496-517 (QAED…SLDE), and 534-581 (SRLR…LQIP). Positions 39–59 (TPSPSGGTPSSSPPLLLSPGL) are enriched in low complexity. Positions 70–164 (REELRLRELE…AQRVRAEQSS (95 aa)) form a coiled coil. Positions 161–184 (EQSSPENASTAPESISSTASTHSN) are enriched in polar residues. A compositionally biased stretch (basic and acidic residues) spans 185-202 (QPREAEIKQDNQDEEGVR). Positions 270-541 (AALEEDTSKL…LQSRLRRQQN (272 aa)) form a coiled coil. Over residues 559–581 (EDADGPPSDPDEDEEEELQLQIP) the composition is skewed to acidic residues.

The sequence is that of Coiled-coil domain-containing protein 102A (ccdc102a) from Danio rerio (Zebrafish).